Consider the following 427-residue polypeptide: MLALLAAGVAFAVVVLAQDKPLPGSHFVCSAIPPEALFAGCPLPATPMQGVSLSPEEELRAAVLQLRETVVMQKETLGAQREAIRELTSKLARCEGLMAGKAESSKDTMGDLPRDPSRVVEQLSRSLQVLKDRLESLELQLRTNASNTGLPSDFREVLQRRLGELERQLLRKVAELEDEKSLLHNETSAHQQKTENTLNALLQRVTELERGNSAFKSPDAFKVSLPFRTNYLYGKIKKTLPELYSFTICLWLRSSASPGIGTPFSYAVPGQANEIVLIEWGNNPIELLINDKVAQLPLFVSDGKWHHICITWTTRDGLWEAFQDGEKLGTGENLAPWHPIKSGGVLILGQEQDTVGGRFDATQAFVGELSQFNIWDRVLRPQEISNIANCSLNMAGNIIPWVDNNVDVFGGASKWPVETCEERLLDL.

A signal peptide spans 1–17 (MLALLAAGVAFAVVVLA). N-linked (GlcNAc...) asparagine glycans are attached at residues asparagine 144 and asparagine 185. A Pentraxin (PTX) domain is found at 219-420 (DAFKVSLPFR…GASKWPVETC (202 aa)). An intrachain disulfide couples cysteine 249 to cysteine 309. Residues asparagine 273, glutamate 351, glutamine 352, aspartate 353, and glutamine 363 each contribute to the Ca(2+) site. A glycan (N-linked (GlcNAc...) asparagine) is linked at asparagine 389.

As to quaternary structure, homooligomer or heterooligomer (probably pentamer) with neuronal pentraxin receptor (NPTXR). It depends on Ca(2+) as a cofactor. Testis specific.

The protein resides in the cytoplasmic vesicle. It is found in the secretory vesicle. It localises to the acrosome lumen. In terms of biological role, may be involved in binding, concentrating, and sorting soluble glycoproteins or glycolipids that are destined for the acrosome. This Cavia porcellus (Guinea pig) protein is Neuronal pentraxin-2 (NPTX2).